Consider the following 681-residue polypeptide: Calpain-C (681 aa).

One can recognise a Calpain catalytic domain in the interval 18-331 (LWEDPDFPAV…FSTMEVVYLD (314 aa)). Residues 332–481 (TETSNDEEML…ILGTGSFRLS (150 aa)) form a domain III region. The interval 482–514 (CLETQTMILLDPFPALKSTDAERCGGPKVKSVC) is linker. Residues 515–681 (QYEPVYMQLA…HDWIKSILSC (167 aa)) are domain IV. The 36-residue stretch at 552-587 (ANIDICRQVIALQDRSGSGRITFQQFKTFMVNLKSW) folds into the EF-hand domain. The Ca(2+) site is built by aspartate 565, serine 567, serine 569, and arginine 571.

The protein belongs to the peptidase C2 family. Localized to the salivary glands in the larva.

The protein resides in the cytoplasm. In terms of biological role, not known; does not seem to have protease activity. This chain is Calpain-C, found in Drosophila melanogaster (Fruit fly).